Here is a 118-residue protein sequence, read N- to C-terminus: Large ribosomal subunit protein bL19 (118 aa).

The protein belongs to the bacterial ribosomal protein bL19 family.

Its function is as follows. This protein is located at the 30S-50S ribosomal subunit interface and may play a role in the structure and function of the aminoacyl-tRNA binding site. This Alcanivorax borkumensis (strain ATCC 700651 / DSM 11573 / NCIMB 13689 / SK2) protein is Large ribosomal subunit protein bL19.